A 941-amino-acid chain; its full sequence is Translation initiation factor IF-2 (941 aa).

Residues 170-209 show a composition bias toward basic and acidic residues; that stretch reads DAQKAEVDAQKAEAEKPVEVKADESAIEEKKRVAAEESKK. Disordered stretches follow at residues 170-228 and 252-351; these read DAQK…KAAA and RAIK…SNFQ. The span at 256–269 shows a compositional bias: low complexity; the sequence is APEPVAPVAKPAAE. Residues 271-297 show a composition bias toward basic and acidic residues; it reads TLHKPADKKPGEKKDEKKPAVTADKKS. A compositionally biased stretch (polar residues) spans 299 to 308; sequence KSANVSSTWQ. Residues 441 to 610 form the tr-type G domain; it reads PRAPVVTVMG…LLQAEVLELK (170 aa). The interval 450 to 457 is G1; the sequence is GHVDHGKT. 450–457 serves as a coordination point for GTP; sequence GHVDHGKT. Residues 475 to 479 form a G2 region; the sequence is GITQH. The interval 496–499 is G3; that stretch reads DTPG. GTP-binding positions include 496–500 and 550–553; these read DTPGH and NKID. The segment at 550-553 is G4; it reads NKID. Residues 586–588 are G5; that stretch reads SAK.

This sequence belongs to the TRAFAC class translation factor GTPase superfamily. Classic translation factor GTPase family. IF-2 subfamily.

Its subcellular location is the cytoplasm. Its function is as follows. One of the essential components for the initiation of protein synthesis. Protects formylmethionyl-tRNA from spontaneous hydrolysis and promotes its binding to the 30S ribosomal subunits. Also involved in the hydrolysis of GTP during the formation of the 70S ribosomal complex. The protein is Translation initiation factor IF-2 of Herminiimonas arsenicoxydans.